Consider the following 274-residue polypeptide: Putative ankyrin repeat protein R597 (274 aa).

4 ANK repeats span residues 78-112 (VGLP…NNND), 114-144 (PISE…SLKI), 146-174 (SRYH…DIQG), and 176-205 (NLSY…NIND).

The sequence is that of Putative ankyrin repeat protein R597 from Acanthamoeba polyphaga mimivirus (APMV).